A 351-amino-acid polypeptide reads, in one-letter code: Nuclear inhibitor of protein phosphatase 1 (351 aa).

Residues 1 to 142 form an interaction with CDC5L, SF3B1 and MELK region; sequence MAAAANSGSS…LPSAVKGDEK (142 aa). Residues 49-101 enclose the FHA domain; that stretch reads YLFGRNPDLCDFTIDHQSCSRVHAALVYHKHLKRVFLIDLNSTHGTFLGHIRL. The interaction with EED stretch occupies residues 143–224; that stretch reads MGGEDDELKG…VDPSVGRFRN (82 aa). At Thr161 the chain carries Phosphothreonine; by CK2; in vitro. Position 178 is a phosphoserine; by PKA; in vitro (Ser178). 2 short sequence motifs (nuclear localization signal) span residues 185–209 and 210–240; these read GNLDIQRPKRKRKNSRVTFSEDDEI and INPEDVDPSVGRFRNMVQTAVVPVKKKRVEG. The segment at 191-200 is involved in PP-1 inhibition; the sequence is RPKRKRKNSR. The residue at position 199 (Ser199) is a Phosphoserine. The segment at 200-203 is involved in PP-1 binding; it reads RVTF. Ser204 is modified (phosphoserine). Ser249 carries the phosphoserine modification. Residue Tyr264 is modified to Phosphotyrosine. The interval 310–329 is interaction with EED; sequence AVNMNPAPNPAVYNPEAVNE. The interval 316–351 is disordered; sequence APNPAVYNPEAVNEPKKKKYAKEAWPGKKPTPSLLI. Positions 330 to 351 are RNA-binding; sequence PKKKKYAKEAWPGKKPTPSLLI. The tract at residues 331–337 is involved in PP-1 inhibition; sequence KKKKYAK. The residue at position 335 (Tyr335) is a Phosphotyrosine.

Interacts with phosphorylated CDC5L, SF3B1 and MELK. Interacts with EED. Part of a complex consisting of PPP1R8, EED, HDAC2 and PP-1. Part of the spliceosome. Interacts with PPP1CA, PPP1CB and PPP1CC. In terms of processing, the N-terminus is blocked. Post-translationally, inactivated by phosphorylation on Ser-199 or Ser-204.

The protein localises to the nucleus. Its subcellular location is the nucleus speckle. Its function is as follows. Inhibitor subunit of the major nuclear protein phosphatase-1 (PP-1). It has RNA-binding activity but does not cleave RNA and may target PP-1 to RNA-associated substrates. May also be involved in pre-mRNA splicing. Binds DNA and might act as a transcriptional repressor. Seems to be required for cell proliferation. The sequence is that of Nuclear inhibitor of protein phosphatase 1 (PPP1R8) from Bos taurus (Bovine).